The following is a 437-amino-acid chain: Phosphatidylserine decarboxylase proenzyme 1, mitochondrial (437 aa).

Residues 1-18 (MLKFHRNVKPQFGAFARY) constitute a mitochondrion transit peptide. The Mitochondrial matrix segment spans residues 19–38 (SSLGKHNSRKRVGIIRLAYG). A helical membrane pass occupies residues 39–57 (LTGIGLVGLAGFAWAQDRH). At 58 to 437 (EKTYQKKGVQ…PLGRVVPSSH (380 aa)) the chain is on the mitochondrial intermembrane side. Residues Asp-157, His-287, and Ser-401 each act as charge relay system; for autoendoproteolytic cleavage activity in the active site. Catalysis depends on Ser-401, which acts as the Schiff-base intermediate with substrate; via pyruvic acid; for decarboxylase activity. Position 401 is a pyruvic acid (Ser); by autocatalysis (Ser-401).

This sequence belongs to the phosphatidylserine decarboxylase family. PSD-B subfamily. Eukaryotic type I sub-subfamily. In terms of assembly, heterodimer of a large membrane-associated beta subunit and a small pyruvoyl-containing alpha subunit. Pyruvate is required as a cofactor. In terms of processing, is synthesized initially as an inactive proenzyme. Formation of the active enzyme involves a self-maturation process in which the active site pyruvoyl group is generated from an internal serine residue via an autocatalytic post-translational modification. Two non-identical subunits are generated from the proenzyme in this reaction, and the pyruvate is formed at the N-terminus of the alpha chain, which is derived from the carboxyl end of the proenzyme. The autoendoproteolytic cleavage occurs by a canonical serine protease mechanism, in which the side chain hydroxyl group of the serine supplies its oxygen atom to form the C-terminus of the beta chain, while the remainder of the serine residue undergoes an oxidative deamination to produce ammonia and the pyruvoyl prosthetic group on the alpha chain. During this reaction, the Ser that is part of the protease active site of the proenzyme becomes the pyruvoyl prosthetic group, which constitutes an essential element of the active site of the mature decarboxylase.

The protein localises to the mitochondrion. The protein resides in the mitochondrion inner membrane. The catalysed reaction is a 1,2-diacyl-sn-glycero-3-phospho-L-serine + H(+) = a 1,2-diacyl-sn-glycero-3-phosphoethanolamine + CO2. The protein operates within phospholipid metabolism; phosphatidylethanolamine biosynthesis; phosphatidylethanolamine from CDP-diacylglycerol: step 2/2. Functionally, catalyzes the formation of phosphatidylethanolamine (PtdEtn) from phosphatidylserine (PtdSer). Plays a central role in phospholipid metabolism and in the interorganelle trafficking of phosphatidylserine. Together with psd2 and psd3, responsible for the majority of phosphatidylethanolamine synthesis. The sequence is that of Phosphatidylserine decarboxylase proenzyme 1, mitochondrial from Schizosaccharomyces pombe (strain 972 / ATCC 24843) (Fission yeast).